The following is a 131-amino-acid chain: Small ribosomal subunit protein uS8 (131 aa).

It belongs to the universal ribosomal protein uS8 family. Part of the 30S ribosomal subunit. Contacts proteins S5 and S12.

In terms of biological role, one of the primary rRNA binding proteins, it binds directly to 16S rRNA central domain where it helps coordinate assembly of the platform of the 30S subunit. In Burkholderia mallei (strain NCTC 10247), this protein is Small ribosomal subunit protein uS8.